Reading from the N-terminus, the 335-residue chain is Adenosine deaminase (335 aa).

Residues H12 and H14 each contribute to the Zn(2+) site. 2 residues coordinate substrate: H14 and D16. A Zn(2+)-binding site is contributed by H197. E200 functions as the Proton donor in the catalytic mechanism. D278 contributes to the Zn(2+) binding site.

This sequence belongs to the metallo-dependent hydrolases superfamily. Adenosine and AMP deaminases family. Adenosine deaminase subfamily. Zn(2+) serves as cofactor.

It carries out the reaction adenosine + H2O + H(+) = inosine + NH4(+). The enzyme catalyses 2'-deoxyadenosine + H2O + H(+) = 2'-deoxyinosine + NH4(+). Functionally, catalyzes the hydrolytic deamination of adenosine and 2-deoxyadenosine. This is Adenosine deaminase from Clostridium botulinum (strain Langeland / NCTC 10281 / Type F).